Here is a 222-residue protein sequence, read N- to C-terminus: uncharacterized protein (222 aa).

The segment at 142-222 is disordered; sequence ARRGGCVHPP…LPDPPSAGHL (81 aa). Residues 160-169 are compositionally biased toward low complexity; that stretch reads QSRSISSRRA. The span at 182-196 shows a compositional bias: basic residues; that stretch reads PRRRPHRHRTRPQTR.

It belongs to the Rv1128c/1148c/1588c/1702c/1945/3466 family.

This is an uncharacterized protein from Mycobacterium tuberculosis (strain CDC 1551 / Oshkosh).